Consider the following 181-residue polypeptide: Lectin beta-1 and beta-2 chains (181 aa).

Mn(2+)-binding residues include Glu-119 and Asp-121. Asp-121, Phe-123, Asn-125, and Asp-129 together coordinate Ca(2+). Residues Asp-129 and His-136 each coordinate Mn(2+).

Belongs to the leguminous lectin family. In terms of assembly, tetramer of two alpha and two beta chains.

In Lathyrus ochrus (Cyprus-vetch), this protein is Lectin beta-1 and beta-2 chains.